Here is a 926-residue protein sequence, read N- to C-terminus: Peripheral plasma membrane protein CASK (926 aa).

The Protein kinase domain maps to 12 to 276; sequence YELCEVIGKG…VYEALNHPWL (265 aa). Residues 18-26 and Lys-41 each bind ATP; that span reads IGKGPFSVV. Ser-51 carries the phosphoserine modification. Asp-141 is an active-site residue. 2 positions are modified to phosphoserine; by autocatalysis: Ser-151 and Ser-155. Thr-182 carries the phosphothreonine modification. The interval 305-315 is calmodulin-binding; that stretch reads KGAVLAAVSSH. Ser-313 carries the post-translational modification Phosphoserine. L27 domains are found at residues 343 to 398 and 402 to 455; these read AERA…SPQI and PSDA…YSDE. The segment at 482–909 is required for interaction with NRXN1 (via C-terminal tail); sequence MENVTRVRLV…DETIRHLEEA (428 aa). In terms of domain architecture, PDZ spans 490-571; the sequence is LVQFQKNTDE…SITFKIVPSY (82 aa). Phosphoserine is present on residues Ser-570 and Tyr-571. The interval 574-610 is disordered; sequence QSSSCERDSPSTSRQSPANGHSSTNNSVSDLPSTTQP. Residues 612-682 enclose the SH3 domain; that stretch reads GRQIYVRAQF…PSPELQEWRV (71 aa). A Guanylate kinase-like domain is found at 739-911; the sequence is RKTLVLLGAH…TIRHLEEAVE (173 aa).

In the N-terminal section; belongs to the protein kinase superfamily. CAMK Ser/Thr protein kinase family. CaMK subfamily. The protein belongs to the MAGUK family. CASK and LIN7 form a tripartite complex with CASKIN1. Component of the brain-specific heterotrimeric complex (LIN-10-LIN-2-LIN-7 complex) composed of at least APBA1, CASK, and LIN7, which associates with the motor protein KIF17 to transport vesicles along microtubules. Forms a heterotrimeric complex with DLG1 and LIN7B via their L27 domains. Identified in a complex with ACTN4, IQGAP1, MAGI2, NPHS1, SPTAN1 and SPTBN1. Part of a complex containing CASK, TBR1 and TSPYL2. Interacts with WHRN. Interacts (via the PDZ, SH3 and guanylate kinase-like domains) with NRXN1 (via C-terminus). Interacts with CASKIN1, APBA1, LIN7(A/B/C), and L27 domain of DLG1 and isoform 2 of DLG4. Interacts with FCHSD2. Interacts with KIRREL3. Interacts with TBR1. Interacts with TSPYL2. Unlike other protein kinases, does not require a divalent cation such as magnesium for catalytic activity. serves as cofactor.

The protein resides in the nucleus. It localises to the cytoplasm. The protein localises to the cell membrane. It catalyses the reaction L-seryl-[protein] + ATP = O-phospho-L-seryl-[protein] + ADP + H(+). It carries out the reaction L-threonyl-[protein] + ATP = O-phospho-L-threonyl-[protein] + ADP + H(+). Differs from archetypal CaMK members in that the kinase domain exhibits a constitutively active conformation and the autoinhibitory region does not engage in direct contact with the ATP-binding cleft, although it still binds Ca(2+)/CAM. Functionally, multidomain scaffolding Mg(2+)-independent protein kinase that catalyzes the phosphotransfer from ATP to proteins such as NRXN1, and plays a role in synaptic transmembrane protein anchoring and ion channel trafficking. Contributes to neural development and regulation of gene expression via interaction with the transcription factor TBR1. Binds to cell-surface proteins, including amyloid precursor protein, neurexins, and syndecans. May mediate a link between the extracellular matrix and the actin cytoskeleton via its interaction with syndecan and with the actin/spectrin-binding protein 4.1. Component of the LIN-10-LIN-2-LIN-7 complex, which associates with the motor protein KIF17 to transport vesicles containing N-methyl-D-aspartate (NMDA) receptor subunit NR2B along microtubules. In Mus musculus (Mouse), this protein is Peripheral plasma membrane protein CASK.